The chain runs to 99 residues: Cytochrome c-555 (99 aa).

Cys23, Cys26, His27, and Met73 together coordinate heme c.

In terms of processing, binds 1 heme c group covalently per subunit.

The chain is Cytochrome c-555 from Prosthecochloris aestuarii.